The primary structure comprises 138 residues: Transcription antitermination protein NusB (138 aa).

This sequence belongs to the NusB family.

Functionally, involved in transcription antitermination. Required for transcription of ribosomal RNA (rRNA) genes. Binds specifically to the boxA antiterminator sequence of the ribosomal RNA (rrn) operons. This is Transcription antitermination protein NusB from Photorhabdus laumondii subsp. laumondii (strain DSM 15139 / CIP 105565 / TT01) (Photorhabdus luminescens subsp. laumondii).